The sequence spans 603 residues: ADP-ribosylation factor-binding protein GGA2 (603 aa).

Residues 1–22 (MAATAVAAGTGSPAGTESAEGG) form a disordered region. The segment covering 13-22 (PAGTESAEGG) has biased composition (low complexity). The VHS domain maps to 36 to 166 (ATDPSMAEQD…MLKKQGIIKQ (131 aa)). In terms of domain architecture, GAT spans 190–317 (DEEKSKLLTR…GVRLYKQVVE (128 aa)). Residues 318-473 (GRVSAGNAVP…VFVPLESVKP (156 aa)) are unstructured hinge. Residues 474-595 (SSLPPIVVYD…SEVGEVKDFP (122 aa)) enclose the GAE domain.

Belongs to the GGA protein family. Monomer. Interacts with NECAP1, TSG101, UBC and AFTPH/aftiphilin. Interacts with CNST. Interacts with GGA1 and GGA3. Binds to clathrin and activated ARFs, such as ARF1, ARF5 and ARF6. Binds RABEP1 and RABGEF1. Interacts with the type-I membrane proteins LRP3, M6PR/CD-MPR, IGF2R/CI-MPR and BACE1. Interacts (via N-terminal VHS domain) with SORL1/sorLA and SORT1 (via C-terminal cytosolic domain). Binds the accessory proteins CCDC91, P200, SYNRG, EPN4 and NECAP2. Interacts with ADRA2B. Interacts (via VHS domain) with PIK4B; the interaction is important for PIK4B location at the Golgi apparatus membrane. Post-translationally, ubiquitinated.

The protein localises to the golgi apparatus. Its subcellular location is the trans-Golgi network membrane. It is found in the endosome membrane. The protein resides in the early endosome membrane. Its function is as follows. Plays a role in protein sorting and trafficking between the trans-Golgi network (TGN) and endosomes. Mediates the ARF-dependent recruitment of clathrin to the TGN and binds ubiquitinated proteins and membrane cargo molecules with a cytosolic acidic cluster-dileucine (DXXLL) motif. Mediates export of the GPCR receptor ADRA2B to the cell surface. Regulates retrograde transport of phosphorylated form of BACE1 from endosomes to the trans-Golgi network. This Mus musculus (Mouse) protein is ADP-ribosylation factor-binding protein GGA2 (Gga2).